Consider the following 346-residue polypeptide: Tetraacyldisaccharide 4'-kinase (346 aa).

54 to 61 (TVGGAGKT) lines the ATP pocket.

Belongs to the LpxK family.

The catalysed reaction is a lipid A disaccharide + ATP = a lipid IVA + ADP + H(+). Its pathway is glycolipid biosynthesis; lipid IV(A) biosynthesis; lipid IV(A) from (3R)-3-hydroxytetradecanoyl-[acyl-carrier-protein] and UDP-N-acetyl-alpha-D-glucosamine: step 6/6. Functionally, transfers the gamma-phosphate of ATP to the 4'-position of a tetraacyldisaccharide 1-phosphate intermediate (termed DS-1-P) to form tetraacyldisaccharide 1,4'-bis-phosphate (lipid IVA). The polypeptide is Tetraacyldisaccharide 4'-kinase (Sinorhizobium medicae (strain WSM419) (Ensifer medicae)).